A 147-amino-acid chain; its full sequence is Small ribosomal subunit protein uS9 (147 aa).

Positions 128 to 147 are disordered; that stretch reads KERKKYGQMGARAKYRWSKR.

This sequence belongs to the universal ribosomal protein uS9 family.

In Aquifex aeolicus (strain VF5), this protein is Small ribosomal subunit protein uS9 (rpsI).